Here is a 434-residue protein sequence, read N- to C-terminus: Nuclear receptor subfamily 1 group I member 2 (434 aa).

Positions 38-107 (PQICRVCGDK…RLRKCLESGM (70 aa)) form a DNA-binding region, nuclear receptor. NR C4-type zinc fingers lie at residues 41-61 (CRVC…CEGC) and 77-102 (CPFR…LRKC). The short motif at 66–92 (RRAMKRNARLRCPFRKGACEITRKTRR) is the Bipartite nuclear localization signal element. The segment at 108 to 145 (KKEMIMSDEAVEERRALIKRKKSERTGTQPLGVQGLTE) is hinge. One can recognise an NR LBD domain in the interval 146-433 (EQRMMIRELM…LMQELFGITG (288 aa)). Hyperforin-binding positions include serine 247, 285 to 288 (QLRF), and histidine 407.

The protein belongs to the nuclear hormone receptor family. NR1 subfamily. As to quaternary structure, heterodimer with RXR. Interacts with NCOA1. Interacts (via domain NR LBD) with CRY1 and CRY2 in a ligand-dependent manner. As to expression, expressed in liver, colon and small intestine.

The protein resides in the nucleus. Nuclear receptor that binds and is activated by variety of endogenous and xenobiotic compounds. Transcription factor that activates the transcription of multiple genes involved in the metabolism and secretion of potentially harmful xenobiotics, drugs and endogenous compounds. Activated by the antibiotic rifampicin and various plant metabolites, such as hyperforin, guggulipid, colupulone, and isoflavones. Response to specific ligands is species-specific. Activated by naturally occurring steroids, such as pregnenolone and progesterone. Binds to a response element in the promoters of the CYP3A4 and ABCB1/MDR1 genes. The polypeptide is Nuclear receptor subfamily 1 group I member 2 (NR1I2) (Homo sapiens (Human)).